A 1308-amino-acid polypeptide reads, in one-letter code: D-lysergyl-peptide-synthetase subunit 2 (1308 aa).

Residues 261–658 (EWCRRTPSAV…CRKSTQVKLR (398 aa)) form an adenylation (A) domain region. Residues 803-871 (IEEAFQRFFA…ELSELARHTK (69 aa)) enclose the Carrier domain. Ser835 bears the O-(pantetheine 4'-phosphoryl)serine mark. Positions 910 to 1299 (EDVYPCTPLQ…HAAPRTLIGD (390 aa)) are condensation (C) domain.

The protein belongs to the NRP synthetase family.

The protein operates within alkaloid biosynthesis; ergot alkaloid biosynthesis. D-lysergyl-peptide-synthetase subunit 2; part of the gene cluster that mediates the biosynthesis of fungal ergot alkaloid. DmaW catalyzes the first step of ergot alkaloid biosynthesis by condensing dimethylallyl diphosphate (DMAP) and tryptophan to form 4-dimethylallyl-L-tryptophan. The second step is catalyzed by the methyltransferase easF that methylates 4-dimethylallyl-L-tryptophan in the presence of S-adenosyl-L-methionine, resulting in the formation of 4-dimethylallyl-L-abrine. The catalase easC and the FAD-dependent oxidoreductase easE then transform 4-dimethylallyl-L-abrine to chanoclavine-I which is further oxidized by EasD in the presence of NAD(+), resulting in the formation of chanoclavine-I aldehyde. Agroclavine dehydrogenase easG then mediates the conversion of chanoclavine-I aldehyde to agroclavine via a non-enzymatic adduct reaction: the substrate is an iminium intermediate that is formed spontaneously from chanoclavine-I aldehyde in the presence of glutathione. The presence of easA is not required to complete this reaction. Further conversion of agroclavine to paspalic acid is a two-step process involving oxidation of agroclavine to elymoclavine and of elymoclavine to paspalic acid, the second step being performed by the elymoclavine oxidase cloA. Paspalic acid is then further converted to D-lysergic acid. Ergopeptines are assembled from D-lysergic acid and three different amino acids by the D-lysergyl-peptide-synthetases composed each of a monomudular and a trimodular nonribosomal peptide synthetase subunit. LpsB and lpsC encode the monomodular subunits responsible for D-lysergic acid activation and incorporation into the ergopeptine backbone. LpsA1 and A2 subunits encode the trimodular nonribosomal peptide synthetase assembling the tripeptide portion of ergopeptines. LpsA1 is responsible for formation of the major ergopeptine, ergotamine, and lpsA2 for alpha-ergocryptine, the minor ergopeptine of the total alkaloid mixture elaborated by C.purpurea. D-lysergyl-tripeptides are assembled by the nonribosomal peptide synthetases and released as N-(D-lysergyl-aminoacyl)-lactams. Cyclolization of the D-lysergyl-tripeptides is performed by the Fe(2+)/2-ketoglutarate-dependent dioxygenase easH which introduces a hydroxyl group into N-(D-lysergyl-aminoacyl)-lactam at alpha-C of the aminoacyl residue followed by spontaneous condensation with the terminal lactam carbonyl group. This chain is D-lysergyl-peptide-synthetase subunit 2, found in Claviceps purpurea (Ergot fungus).